Reading from the N-terminus, the 386-residue chain is MKLLKSHPFLSLANSYVIDSPQPSNLNYAWNFGSLLALCLGIQIVTGVTLAMHYTPNIDLAFISVEHIMRDVNYGWMIRYLHANTASFFFLFVYLHIGRGLYYGSYKSPRALPWSIGVIILILMMATAFLGYVLPWGQMSLWGATVITNLLSAIPWIGKDLVEFIWGGFSVDNATLNRFFSLHYLLPFILAALAVMHLLALHEHGSSNPLGITANADRLYMHPYYTFKDLVTIFLFFLVLALFLFYAPNKLGHPDNYIPANPMQTPASIVPEWYLLPFYAILRSIPDKLGGVIAMFGSLLILLAMPLLDLSRVRGSAFRPLMKFFFWLLVVDFLILLWCGSQHVEEPFITLGQFATTFYFSWFLIIVPVVSVIENTLIDLATENKS.

4 helical membrane passes run 32–52, 76–98, 113–133, and 179–199; these read FGSLLALCLGIQIVTGVTLAM, WMIRYLHANTASFFFLFVYLHIG, PWSIGVIILILMMATAFLGYV, and FFSLHYLLPFILAALAVMHLL. Residues histidine 82 and histidine 96 each coordinate heme b. Heme b is bound by residues histidine 183 and histidine 197. A ubiquinone is bound at residue histidine 202. 4 helical membrane passes run 225 to 245, 289 to 309, 321 to 341, and 348 to 368; these read YTFKDLVTIFLFFLVLALFLF, LGGVIAMFGSLLILLAMPLLD, LMKFFFWLLVVDFLILLWCGS, and FITLGQFATTFYFSWFLIIVP.

The protein belongs to the cytochrome b family. In terms of assembly, fungal cytochrome b-c1 complex contains 10 subunits; 3 respiratory subunits, 2 core proteins and 5 low-molecular weight proteins. Cytochrome b-c1 complex is a homodimer. Requires heme b as cofactor.

The protein resides in the mitochondrion inner membrane. Component of the ubiquinol-cytochrome c reductase complex (complex III or cytochrome b-c1 complex) that is part of the mitochondrial respiratory chain. The b-c1 complex mediates electron transfer from ubiquinol to cytochrome c. Contributes to the generation of a proton gradient across the mitochondrial membrane that is then used for ATP synthesis. The sequence is that of Cytochrome b (cob) from Rhizopus oryzae (Mucormycosis agent).